Here is an 808-residue protein sequence, read N- to C-terminus: Auxin response factor 4 (808 aa).

A compositionally biased stretch (pro residues) spans 1-13; that stretch reads MPPAAMAPPPPPQ. The disordered stretch occupies residues 1-20; it reads MPPAAMAPPPPPQGSSTGDP. The segment at residues 129–231 is a DNA-binding region (TF-B3); that stretch reads FCKTLTASDT…ELRVGVRRAM (103 aa). The span at 342–352 shows a compositional bias: basic and acidic residues; the sequence is PSTIPRPDRVS. Disordered regions lie at residues 342–433, 661–691, and 778–808; these read PSTI…DSDV, TAGT…VAST, and QKMN…KSDN. Residues 402 to 432 show a composition bias toward polar residues; that stretch reads AQAQRSQNSTVLQGQEQMTLRSNLTESNDSD. The region spanning 692–785 is the PB1 domain; sequence RSCTKVHKQG…EVQKMNSKSN (94 aa). Basic and acidic residues predominate over residues 787–799; sequence PRKDDSSENEKGH.

This sequence belongs to the ARF family. In terms of assembly, homodimers and heterodimers. Expressed in roots, culms, leaves and young panicles.

It localises to the nucleus. In terms of biological role, auxin response factors (ARFs) are transcriptional factors that bind specifically to the DNA sequence 5'-TGTCTC-3' found in the auxin-responsive promoter elements (AuxREs). The sequence is that of Auxin response factor 4 (ARF4) from Oryza sativa subsp. japonica (Rice).